A 177-amino-acid chain; its full sequence is Chorismate pyruvate-lyase (177 aa).

Substrate contacts are provided by Met-37, Arg-79, Leu-117, and Glu-159.

It belongs to the UbiC family. As to quaternary structure, monomer.

The protein resides in the cytoplasm. It carries out the reaction chorismate = 4-hydroxybenzoate + pyruvate. The protein operates within cofactor biosynthesis; ubiquinone biosynthesis. In terms of biological role, removes the pyruvyl group from chorismate, with concomitant aromatization of the ring, to provide 4-hydroxybenzoate (4HB) for the ubiquinone pathway. The chain is Chorismate pyruvate-lyase from Sodalis glossinidius (strain morsitans).